The primary structure comprises 160 residues: Crossover junction endodeoxyribonuclease RuvC (160 aa).

Catalysis depends on residues D9, E68, and D141. Mg(2+)-binding residues include D9, E68, and D141.

Belongs to the RuvC family. Homodimer which binds Holliday junction (HJ) DNA. The HJ becomes 2-fold symmetrical on binding to RuvC with unstacked arms; it has a different conformation from HJ DNA in complex with RuvA. In the full resolvosome a probable DNA-RuvA(4)-RuvB(12)-RuvC(2) complex forms which resolves the HJ. The cofactor is Mg(2+).

The protein resides in the cytoplasm. It catalyses the reaction Endonucleolytic cleavage at a junction such as a reciprocal single-stranded crossover between two homologous DNA duplexes (Holliday junction).. Functionally, the RuvA-RuvB-RuvC complex processes Holliday junction (HJ) DNA during genetic recombination and DNA repair. Endonuclease that resolves HJ intermediates. Cleaves cruciform DNA by making single-stranded nicks across the HJ at symmetrical positions within the homologous arms, yielding a 5'-phosphate and a 3'-hydroxyl group; requires a central core of homology in the junction. The consensus cleavage sequence is 5'-(A/T)TT(C/G)-3'. Cleavage occurs on the 3'-side of the TT dinucleotide at the point of strand exchange. HJ branch migration catalyzed by RuvA-RuvB allows RuvC to scan DNA until it finds its consensus sequence, where it cleaves and resolves the cruciform DNA. This chain is Crossover junction endodeoxyribonuclease RuvC, found in Campylobacter jejuni (strain RM1221).